The sequence spans 293 residues: Proline iminopeptidase (293 aa).

The active-site Nucleophile is serine 105. Aspartate 244 is an active-site residue. Catalysis depends on histidine 271, which acts as the Proton donor.

It belongs to the peptidase S33 family. As to quaternary structure, part of the tricorn proteolytic complex.

The catalysed reaction is Release of N-terminal proline from a peptide.. In terms of biological role, cleaves H-Pro-AMC as well as a wide spectrum of amino acid substrates and several peptide substrates without a proline at the N-terminus. Proteases F1, F2 and F3 degrade oligopeptides produced by Tricorn (themselves probably produced by the proteasome) yielding free amino acids. The chain is Proline iminopeptidase (pip) from Thermoplasma acidophilum (strain ATCC 25905 / DSM 1728 / JCM 9062 / NBRC 15155 / AMRC-C165).